We begin with the raw amino-acid sequence, 207 residues long: Fibroblast growth factor 18 (207 aa).

An N-terminal signal peptide occupies residues 1 to 27 (MYSAPSACTCLCLHFLLLCFQVQVLVA). N-linked (GlcNAc...) asparagine glycosylation is present at asparagine 39. A disulfide bond links cysteine 109 and cysteine 127. N-linked (GlcNAc...) asparagine glycosylation is present at asparagine 137. Positions 157-186 (GRPRKGPKTRENQQDVHFMKRYPKGQPELQ) are disordered. A compositionally biased stretch (basic and acidic residues) spans 164-174 (KTRENQQDVHF).

The protein belongs to the heparin-binding growth factors family. As to quaternary structure, interacts with FGFR3 and FGFR4.

Its subcellular location is the secreted. Plays an important role in the regulation of cell proliferation, cell differentiation and cell migration. Required for normal ossification and bone development. Stimulates hepatic and intestinal proliferation. The chain is Fibroblast growth factor 18 (FGF18) from Homo sapiens (Human).